The primary structure comprises 206 residues: HTH-type transcriptional regulator Hpr (206 aa).

The region spanning 13 to 157 is the HTH marR-type domain; that stretch reads ALLFSQRMAQ…MMCIIRNIYG (145 aa). The H-T-H motif DNA-binding region spans 63-86; that stretch reads ISEIAKFGVMHVSTAFNFSKKLEE. The interval 186–206 is disordered; it reads SEELEDSADAAEKAAKANQIV.

In terms of assembly, homodimer.

Functionally, negative regulator of protease production and sporulation. In Bacillus pumilus (strain SAFR-032), this protein is HTH-type transcriptional regulator Hpr.